We begin with the raw amino-acid sequence, 830 residues long: Phenylalanine--tRNA ligase beta subunit (830 aa).

Positions 39 to 158 (GQSLDGVVVG…DDTPVGTPFP (120 aa)) constitute a tRNA-binding domain. One can recognise a B5 domain in the interval 417–492 (PAEKTIALRP…RLHGYDQIPE (76 aa)). Residues D470, D476, E479, and E480 each coordinate Mg(2+). The segment at 490–510 (IPEPERVPVPSRTPEQPPEET) is disordered. An FDX-ACB domain is found at 736 to 828 (SRFPVVDRDL…LAENHGARLR (93 aa)).

Belongs to the phenylalanyl-tRNA synthetase beta subunit family. Type 1 subfamily. Tetramer of two alpha and two beta subunits. Mg(2+) is required as a cofactor.

It is found in the cytoplasm. The catalysed reaction is tRNA(Phe) + L-phenylalanine + ATP = L-phenylalanyl-tRNA(Phe) + AMP + diphosphate + H(+). This Salinibacter ruber (strain DSM 13855 / M31) protein is Phenylalanine--tRNA ligase beta subunit.